Here is a 508-residue protein sequence, read N- to C-terminus: Early growth response protein 1 (508 aa).

Disordered stretches follow at residues P18–S78 and M136–P210. A compositionally biased stretch (low complexity) spans N33 to S42. Over residues S43 to N52 the composition is skewed to gly residues. The span at P139–S164 shows a compositional bias: low complexity. K278 is covalently cross-linked (Glycyl lysine isopeptide (Lys-Gly) (interchain with G-Cter in SUMO2)). Positions S292–Y311 are disordered. 3 consecutive C2H2-type zinc fingers follow at residues Y311–H335, F341–H363, and F369–H391. Residues D382–S453 form a disordered region. A compositionally biased stretch (basic residues) spans R386–D396. Residues S402–P450 show a composition bias toward low complexity. Repeat copies occupy residues S413–A420, T421–T428, T429–P436, T437–S444, S445–H452, S453–V460, and T462–P468. The segment at S413–P468 is 7 X 8 AA tandem repeats of [TS](2)-[FY]-[PS]-S-P-[GSAV]-X.

This sequence belongs to the EGR C2H2-type zinc-finger protein family. As to quaternary structure, interacts with SNAI1 and SP1 upon 12-O-tetradecanoylphorbol-13-acetate (TPA) induction. In terms of tissue distribution, detected in kidney thick ascending limbs and collecting ducts (at protein level).

Its subcellular location is the nucleus. It localises to the cytoplasm. Its function is as follows. Transcriptional regulator. Recognizes and binds to the DNA sequence 5'-GCG(T/G)GGGCG-3'(EGR-site) in the promoter region of target genes. Binds double-stranded target DNA, irrespective of the cytosine methylation status. Regulates the transcription of numerous target genes, and thereby plays an important role in regulating the response to growth factors, DNA damage, and ischemia. Plays a role in the regulation of cell survival, proliferation and cell death. Activates expression of p53/TP53 and TGFB1, and thereby helps prevent tumor formation. Required for normal progress through mitosis and normal proliferation of hepatocytes after partial hepatectomy. Mediates responses to ischemia and hypoxia; regulates the expression of proteins such as IL1B and CXCL2 that are involved in inflammatory processes and development of tissue damage after ischemia. Regulates biosynthesis of luteinizing hormone (LHB) in the pituitary. Regulates the amplitude of the expression rhythms of clock genes: BMAL1, PER2 and NR1D1 in the liver via the activation of PER1 (clock repressor) transcription. Regulates the rhythmic expression of core-clock gene BMAL1 in the suprachiasmatic nucleus (SCN). Regulates biosynthesis of glucocorticoid receptor GR/NR3C1 in the hippocampus and thereby may play a role in the behavioral and hypothalamic-pituitary-adrenal responses to stress in offspring. In Rattus norvegicus (Rat), this protein is Early growth response protein 1 (Egr1).